Reading from the N-terminus, the 433-residue chain is 3-phosphoshikimate 1-carboxyvinyltransferase (433 aa).

Positions 22, 23, and 27 each coordinate 3-phosphoshikimate. Position 22 (K22) interacts with phosphoenolpyruvate. Positions 95 and 123 each coordinate phosphoenolpyruvate. 3-phosphoshikimate-binding residues include S167, Q169, D315, and K342. Q169 contributes to the phosphoenolpyruvate binding site. Residue D315 is the Proton acceptor of the active site. Phosphoenolpyruvate contacts are provided by R346 and R387.

The protein belongs to the EPSP synthase family. Monomer.

Its subcellular location is the cytoplasm. The catalysed reaction is 3-phosphoshikimate + phosphoenolpyruvate = 5-O-(1-carboxyvinyl)-3-phosphoshikimate + phosphate. It participates in metabolic intermediate biosynthesis; chorismate biosynthesis; chorismate from D-erythrose 4-phosphate and phosphoenolpyruvate: step 6/7. Its function is as follows. Catalyzes the transfer of the enolpyruvyl moiety of phosphoenolpyruvate (PEP) to the 5-hydroxyl of shikimate-3-phosphate (S3P) to produce enolpyruvyl shikimate-3-phosphate and inorganic phosphate. This Legionella pneumophila (strain Paris) protein is 3-phosphoshikimate 1-carboxyvinyltransferase.